Reading from the N-terminus, the 978-residue chain is Copper-transporting ATPase HMA4 (978 aa).

The segment covering 1–11 (MEQNGENHLKD) has biased composition (basic and acidic residues). Positions 1-35 (MEQNGENHLKDPLLQADGGGSGASPAGASPRKERK) are disordered. HMA domains follow at residues 37–103 (RKVM…FEVD), 111–177 (AVCR…FGAD), and 186–252 (NKVH…QPPK). Cu(+)-binding residues include Cys48, Cys51, Cys122, and Cys125. The next 8 membrane-spanning stretches (helical) occupy residues 280-300 (FLWS…LPMI), 315-335 (MTIG…IIGW), 352-372 (MDVL…YIVL), 385-405 (FFET…LEVV), 545-565 (FFVP…FVAG), 584-604 (LALQ…LGLA), 907-927 (VWAL…LFPF), and 935-955 (WLAG…SLLL).

This sequence belongs to the cation transport ATPase (P-type) (TC 3.A.3) family. Type IB subfamily. Highly expressed in roots. Expressed in vascular tissues of the stele, mainly in pericycle cells.

The protein localises to the vacuole membrane. It catalyses the reaction Cu(+)(in) + ATP + H2O = Cu(+)(out) + ADP + phosphate + H(+). Copper (Cu) transporter that mediates Cu transport in root vacuoles. Involved in Cu detoxification by sequestrating Cu into root vacuoles and limiting translocation of Cu from the roots to the shoots, and accumulation in grains. This is Copper-transporting ATPase HMA4 from Oryza sativa subsp. japonica (Rice).